The primary structure comprises 185 residues: Ribosome maturation factor RimM (185 aa).

Residues 103-177 (SEEYYWYEIL…SIIVKKIEWY (75 aa)) enclose the PRC barrel domain.

This sequence belongs to the RimM family. Binds ribosomal protein uS19.

The protein resides in the cytoplasm. Functionally, an accessory protein needed during the final step in the assembly of 30S ribosomal subunit, possibly for assembly of the head region. Essential for efficient processing of 16S rRNA. May be needed both before and after RbfA during the maturation of 16S rRNA. It has affinity for free ribosomal 30S subunits but not for 70S ribosomes. In Petrotoga mobilis (strain DSM 10674 / SJ95), this protein is Ribosome maturation factor RimM.